Here is a 153-residue protein sequence, read N- to C-terminus: MMASMRVVKELEDLQKKPPPYLRNLSSDDANVLVWHALLLPDQPPYHLKAFNLRISFPPEYPFKPPMIKFTTKIYHPNVDENGQICLPIISSENWKPCTKTCQVLEALNVLVNRPNIREPLRMDLADLLTQNPELFRKNAEEFTLRFGVDRPS.

The UBC core domain maps to 2–149 (MASMRVVKEL…AEEFTLRFGV (148 aa)). Catalysis depends on cysteine 86, which acts as the Glycyl thioester intermediate.

It belongs to the ubiquitin-conjugating enzyme family. As to quaternary structure, interacts with RNF19A, RNF19B and RNF144B. Interacts with FLT3 (tyrosine phosphorylated). Post-translationally, ISGylated. In terms of tissue distribution, present in natural killer cells (at protein level).

It carries out the reaction S-ubiquitinyl-[E1 ubiquitin-activating enzyme]-L-cysteine + [E2 ubiquitin-conjugating enzyme]-L-cysteine = [E1 ubiquitin-activating enzyme]-L-cysteine + S-ubiquitinyl-[E2 ubiquitin-conjugating enzyme]-L-cysteine.. The protein operates within protein modification; protein ubiquitination. Catalyzes the covalent attachment of ubiquitin or ISG15 to other proteins. Functions in the E6/E6-AP-induced ubiquitination of p53/TP53. Promotes ubiquitination and subsequent proteasomal degradation of FLT3. This chain is Ubiquitin/ISG15-conjugating enzyme E2 L6 (UBE2L6), found in Homo sapiens (Human).